Reading from the N-terminus, the 184-residue chain is Signal peptidase complex subunit 3 (184 aa).

The Cytoplasmic segment spans residues 1-14 (MFSFVQRFQNVSNQ). Residues 15–35 (AFSMGIVMVVFIMASSYYQLI) traverse the membrane as a helical; Signal-anchor for type II membrane protein segment. The Lumenal segment spans residues 36-184 (NNNAFSVPSN…TLTVENKNKV (149 aa)). N-linked (GlcNAc...) asparagine glycosylation is found at asparagine 102 and asparagine 173.

It belongs to the SPCS3 family. Component of the signal peptidase complex (SPC) composed of a catalytic subunit SEC11 and three accessory subunits SPC1, SPC2 and SPC3. The complex induces a local thinning of the ER membrane which is used to measure the length of the signal peptide (SP) h-region of protein substrates. This ensures the selectivity of the complex towards h-regions shorter than 18-20 amino acids. Interacts with SEC11. SPC associates with the translocon complex.

The protein resides in the endoplasmic reticulum membrane. Its function is as follows. Essential component of the signal peptidase complex (SPC) which catalyzes the cleavage of N-terminal signal sequences from nascent proteins as they are translocated into the lumen of the endoplasmic reticulum. Essential for the SPC catalytic activity, possibly by stabilizing and positioning the active center of the complex close to the lumenal surface. Essential for viability. The polypeptide is Signal peptidase complex subunit 3 (SPC3) (Saccharomyces cerevisiae (strain ATCC 204508 / S288c) (Baker's yeast)).